A 318-amino-acid polypeptide reads, in one-letter code: Transcriptional regulator NovG (318 aa).

The segment covering 146 to 156 has biased composition (polar residues); the sequence is VASLRSSSTAG. Positions 146 to 176 are disordered; that stretch reads VASLRSSSTAGTVGRRTGQDGRSRPNDGTDG. Residues 162–176 are compositionally biased toward basic and acidic residues; sequence TGQDGRSRPNDGTDG.

The protein belongs to the ParB family.

Transcription regulator that specifically activates expression of genes involved in the novobiocin biosynthesis pathway. Binds 5'-GTTCRACTG(N)(11)CRGTYGAAC-3' DNA sequence. This chain is Transcriptional regulator NovG (novG), found in Streptomyces niveus (Streptomyces spheroides).